Here is a 103-residue protein sequence, read N- to C-terminus: Histone H4 (103 aa).

Gly residues predominate over residues 1-14; the sequence is MSGRGKGGKGLGKG. The segment at 1 to 20 is disordered; it reads MSGRGKGGKGLGKGGAKRHR. Position 2 is an N-acetylserine (S2). A Phosphoserine modification is found at S2. R4 carries the asymmetric dimethylarginine; by PRMT1; alternate modification. The residue at position 4 (R4) is a Citrulline; alternate. R4 carries the post-translational modification Omega-N-methylarginine; by PRMT1; alternate. Residue R4 is modified to Symmetric dimethylarginine; by PRMT5 and PRMT7; alternate. 4 positions are modified to N6-(2-hydroxyisobutyryl)lysine; alternate: K6, K9, K13, and K17. At K6 the chain carries N6-acetyl-N6-methyllysine; alternate. K6, K9, K13, and K17 each carry N6-acetyllysine. N6-butyryllysine; alternate is present on residues K6, K9, K13, and K17. An N6-glutaryllysine; alternate modification is found at K6. N6-lactoyllysine; alternate is present on residues K6, K9, K13, and K17. At K9 the chain carries N6-propionyllysine; alternate. K13 carries the N6-acetyl-N6-methyllysine; alternate modification. K13 carries the post-translational modification N6-glutaryllysine; alternate. Residue K13 is modified to N6-methyllysine; alternate. At K17 the chain carries N6-propionyllysine; alternate. A DNA-binding region spans residues 17–21; the sequence is KRHRK. K21 is subject to N6-methyllysine; alternate. K21 carries the N6,N6,N6-trimethyllysine; alternate modification. Position 21 is an N6,N6-dimethyllysine; alternate (K21). K21 is modified (N6-methylated lysine). 2 positions are modified to N6-(2-hydroxyisobutyryl)lysine; alternate: K32 and K45. K32 carries the post-translational modification N6-acetyllysine. N6-butyryllysine; alternate is present on residues K32 and K45. N6-glutaryllysine; alternate is present on K32. An N6-lactoyllysine; alternate modification is found at K32. Residues K32 and K45 each carry the N6-propionyllysine; alternate modification. Position 32 is an N6-succinyllysine; alternate (K32). K32 is covalently cross-linked (Glycyl lysine isopeptide (Lys-Gly) (interchain with G-Cter in UFM1); alternate). S48 is subject to Phosphoserine; by PAK2. Y52 is modified (phosphotyrosine). At K60 the chain carries N6-acetyllysine. N6-glutaryllysine; alternate is present on residues K60, K78, and K80. K60 is modified (N6-(2-hydroxyisobutyryl)lysine). An N6-(2-hydroxyisobutyryl)lysine; alternate mark is found at K78 and K80. N6-butyryllysine; alternate is present on residues K78 and K80. K78 carries the post-translational modification N6-lactoyllysine; alternate. N6-propionyllysine; alternate occurs at positions 78 and 80. Residue K78 is modified to N6-succinyllysine. The residue at position 80 (K80) is an N6-acetyllysine. The residue at position 89 (Y89) is a Phosphotyrosine. Position 92 is an N6-(2-hydroxyisobutyryl)lysine; alternate (K92). K92 carries the N6-butyryllysine; alternate modification. K92 bears the N6-glutaryllysine; alternate mark. Position 92 is an N6-lactoyllysine; alternate (K92). Residue K92 is modified to N6-propionyllysine; alternate. Position 92 is an N6-succinyllysine; alternate (K92). The residue at position 92 (K92) is an N6-acetyllysine; alternate. A Glycyl lysine isopeptide (Lys-Gly) (interchain with G-Cter in ubiquitin); alternate cross-link involves residue K92.

This sequence belongs to the histone H4 family. As to quaternary structure, the nucleosome is a histone octamer containing two molecules each of H2A, H2B, H3 and H4 assembled in one H3-H4 heterotetramer and two H2A-H2B heterodimers. The octamer wraps approximately 147 bp of DNA. Acetylation at Lys-6 (H4K5ac), Lys-9 (H4K8ac), Lys-13 (H4K12ac) and Lys-17 (H4K16ac) occurs in coding regions of the genome but not in heterochromatin. In terms of processing, citrullination at Arg-4 (H4R3ci) by PADI4 impairs methylation. Post-translationally, monomethylation and asymmetric dimethylation at Arg-4 (H4R3me1 and H4R3me2a, respectively) by PRMT1 favors acetylation at Lys-9 (H4K8ac) and Lys-13 (H4K12ac). Demethylation is performed by JMJD6. Symmetric dimethylation on Arg-4 (H4R3me2s) by the PRDM1/PRMT5 complex may play a crucial role in the germ-cell lineage. Monomethylated, dimethylated or trimethylated at Lys-21 (H4K20me1, H4K20me2, H4K20me3). Monomethylation is performed by KMT5A/SET8. Trimethylation is performed by KMT5B and KMT5C and induces gene silencing. Monomethylated at Lys-13 (H4K12me1) by N6AMT1; H4K12me1 modification is present at the promoters of numerous genes encoding cell cycle regulators. In terms of processing, acetyl-methylated at Lys-6 and Lys-13 (H4K5acme and H4K12acme, respectively), acetyl-methylation is an epigenetic mark of active chromatin associated with increased transcriptional initiation. Acetyl-methylation is formed by acetylation by EP300/p300 of lysine residues that are already monomethylated on the same side chain. H4K5acme and H4K12acme marks specifically bind BRD2. Post-translationally, phosphorylated by pak2 at Ser-48 (H4S47ph). This phosphorylation increases the association of H3.3-H4 with the histone chaperone HIRA, thus promoting nucleosome assembly of H3.3-H4 and inhibiting nucleosome assembly of H3.1-H4. Ubiquitinated by the CUL4-DDB-RBX1 complex in response to ultraviolet irradiation. This may weaken the interaction between histones and DNA and facilitate DNA accessibility to repair proteins. Monoubiquitinated at Lys-92 of histone H4 (H4K91ub1) in response to DNA damage. The exact role of H4K91ub1 in DNA damage response is still unclear but it may function as a licensing signal for additional histone H4 post-translational modifications such as H4 Lys-21 methylation (H4K20me). In terms of processing, sumoylated, which is associated with transcriptional repression. Post-translationally, butyrylation of histones marks active promoters and competes with histone acetylation. Glutarylation at Lys-92 (H4K91glu) destabilizes nucleosomes by promoting dissociation of the H2A-H2B dimers from nucleosomes. In terms of processing, ufmylated; monofmylated by UFL1 at Lys-32 (H4K31Ufm1) in response to DNA damage. Post-translationally, lactylated in macrophages by EP300/P300 by using lactoyl-CoA directly derived from endogenous or exogenous lactate, leading to stimulates gene transcription. Delactylated by SIRT3 at Lys-17 (H4K16la).

It is found in the nucleus. Its subcellular location is the chromosome. In terms of biological role, core component of nucleosome. Nucleosomes wrap and compact DNA into chromatin, limiting DNA accessibility to the cellular machineries which require DNA as a template. Histones thereby play a central role in transcription regulation, DNA repair, DNA replication and chromosomal stability. DNA accessibility is regulated via a complex set of post-translational modifications of histones, also called histone code, and nucleosome remodeling. In Xenopus laevis (African clawed frog), this protein is Histone H4.